The following is a 103-amino-acid chain: Potassium voltage-gated channel subfamily E member 3 (103 aa).

Residues Asn-5, Asn-22, and Asn-41 are each glycosylated (N-linked (GlcNAc...) asparagine). The segment at Leu-30–Gly-52 is disordered. Residues Ser-57 to Leu-77 traverse the membrane as a helical segment. Residues Phe-68–Tyr-79 form an interaction with KCNQ1 region. Topologically, residues Gly-78 to Ile-103 are cytoplasmic.

It belongs to the potassium channel KCNE family. Interacts with KCNB1. Interacts with KCNC2. Associates with KCNC4/Kv3.4. Interacts with KCNQ1; associates with a KCNQ1:KCNE3 stoichiometry of 4:4; produces a current with nearly instantaneous activation with a linear current-voltage relationship and alters membrane raft localization; affects KCNQ1 structure and gating properties.

The protein resides in the cell membrane. The protein localises to the cytoplasm. It localises to the perikaryon. Its subcellular location is the cell projection. It is found in the dendrite. The protein resides in the membrane raft. Functionally, ancillary protein that functions as a regulatory subunit of the voltage-gated potassium (Kv) channel complex composed of pore-forming and potassium-conducting alpha subunits and of regulatory beta subunits. KCNE3 beta subunit modulates the gating kinetics and enhances stability of the channel complex. Alters the gating of the delayed rectifier Kv channel containing KCNB1 alpha subunit. Associates with KCNC4/Kv3.4 alpha subunit to form the subthreshold Kv channel in skeletal muscle and to establish the resting membrane potential (RMP) in muscle cells. Association with KCNQ1/KCLQT1 alpha subunit may form the intestinal cAMP-stimulated potassium channel involved in chloride secretion that produces a current with nearly instantaneous activation with a linear current-voltage relationship. This is Potassium voltage-gated channel subfamily E member 3 from Mus musculus (Mouse).